We begin with the raw amino-acid sequence, 434 residues long: MNIDMANSDDKALISEDTAHQISADPWYQVGFVLTTGVNSAYVLGYSGSVMVPLGWIGGTCGLILAAAISLYANALLARLHEIGGKRHIRYRDLAGHIYGRKMYSLTWALQYVNLFMINTGFIILAGQALKATYVLFRDDGVLKLPYCIALSGFVCALFAFGIPYLSALRIWLGFSTFFSLIYITIAFVLSLRDGITTPAKDYTIPGSHSARIFTTIGAVANLVFAYNTGMLPEIQATIRPPVVKNMEKALWFQFTVGSLPLYAVTFMGYWAYGSSTSSYLLNSVKGPVWVKAMANLSAFLQTVIALHIFASPMYEFLDTKYGSGHGGPFAIHNVMFRVGVRGGYLTVNTLVAAMLPFLGDFMSLTGALSTFPLTFVLANHMYLMVKRHKLSTLQISWHWLNVAGFSLLSIAAAVAALRLIMVDSRTYHLFADL.

11 helical membrane passes run 26 to 46 (PWYQ…VLGY), 49 to 69 (SVMV…AAAI), 106 to 126 (LTWA…IILA), 149 to 169 (IALS…LSAL), 171 to 191 (IWLG…FVLS), 213 to 233 (IFTT…GMLP), 251 to 271 (LWFQ…MGYW), 297 to 317 (LSAF…MYEF), 339 to 359 (VGVR…LPFL), 362 to 382 (FMSL…ANHM), and 403 to 423 (VAGF…LIMV).

Belongs to the amino acid/polyamine transporter 2 family. Amino acid/auxin permease (AAAP) (TC 2.A.18.3) subfamily.

The protein localises to the cell membrane. Its function is as follows. Proline transporter that mediates proline transport across the plasma membrane. In Oryza sativa subsp. japonica (Rice), this protein is Probable proline transporter 2.